A 351-amino-acid chain; its full sequence is uncharacterized protein (351 aa).

A signal peptide spans 1–27; sequence MKNKKRVLIASSLSCAILLLSAATTQA. The tract at residues 28-71 is disordered; the sequence is NSAHKDSQDQNKKEHVDKSQQKDKRNVTNKDKNSTVPDDIGKNG. Residues 30 to 60 are compositionally biased toward basic and acidic residues; that stretch reads AHKDSQDQNKKEHVDKSQQKDKRNVTNKDKN.

It belongs to the aerolysin family.

This is an uncharacterized protein from Staphylococcus aureus (strain N315).